Reading from the N-terminus, the 502-residue chain is Glycerol kinase (502 aa).

T14 serves as a coordination point for ADP. 3 residues coordinate ATP: T14, T15, and S16. T14 contributes to the sn-glycerol 3-phosphate binding site. R18 serves as a coordination point for ADP. The sn-glycerol 3-phosphate site is built by R84, E85, Y136, and D246. Glycerol contacts are provided by R84, E85, Y136, D246, and Q247. ADP-binding residues include T268 and G311. Positions 268, 311, 315, and 412 each coordinate ATP. Residues G412 and N416 each coordinate ADP.

The protein belongs to the FGGY kinase family. In terms of assembly, homotetramer and homodimer (in equilibrium). Heterodimer with EIIA-Glc. Binds 1 zinc ion per glycerol kinase EIIA-Glc dimer. The zinc ion is important for dimerization.

The catalysed reaction is glycerol + ATP = sn-glycerol 3-phosphate + ADP + H(+). The protein operates within polyol metabolism; glycerol degradation via glycerol kinase pathway; sn-glycerol 3-phosphate from glycerol: step 1/1. With respect to regulation, activity of this regulatory enzyme is affected by several metabolites. Allosterically and non-competitively inhibited by fructose 1,6-bisphosphate (FBP) and unphosphorylated phosphocarrier protein EIIA-Glc (III-Glc), an integral component of the bacterial phosphotransferase (PTS) system. In terms of biological role, key enzyme in the regulation of glycerol uptake and metabolism. Catalyzes the phosphorylation of glycerol to yield sn-glycerol 3-phosphate. The protein is Glycerol kinase of Escherichia fergusonii (strain ATCC 35469 / DSM 13698 / CCUG 18766 / IAM 14443 / JCM 21226 / LMG 7866 / NBRC 102419 / NCTC 12128 / CDC 0568-73).